A 1287-amino-acid polypeptide reads, in one-letter code: MPTFLNGDITTPGHLVDPDPRESFADIPEVWDYPDFLDVQLKTFHDFVQDDVPPADREDVGLQAVFNEHFPIKDNRDRYTLEFVNYELDAPKHTVEECIAQGLTYSIPLKATLRLTSKEEEGGEEAIEAIEQEVYLGTLPFMTDRGTFIVNGAERVIVSQLHRSPGAFFEKEIHSNGTELFSARVIPFRGSWMEFSTDVRDVLWAYVDRKKKVPVTTLLRALGFSSDEEIVKMFDLADAVDIGDEDEFEEHLGRELATSVTIEKTIEIVDEDTGEVVDEEMEREVLLPAEHELEEGDWEELDEYDVSRLYLVREDVEDEALDKSTLVETLQKDSSHTEEEALEVIYEKLRGSEAPDLDSAREALERLFFNEDRYDLGDVGRHRMNARLDVDVDTDEKVLTKEDVVGIVRELIRLQNGESTADDIDHLSNRRVKSVGEQLGSQFSLGLARMARTIKERMNLRDADKFTPKDLVNARTIESVINTFFGTNQLSQFMDQTNALAEMTHKRRMSALGPGGLTRERAGFEVRDVHHTHYGRLCPIETPEGPNIGLMLSLCVHSTINDFGFLETPYRVVEDGRVTDRVEYLSAEEEDQATVAQANAPIGDDGHFERDEVRCRHQGDFPIVEPEEVDYMDVAPNQIVSPSASLVPFLSHNDANRALMGSNMQRQGVPLLRSDSPIVGTGLEGRVAKDSRSCVVAEGEGVVEYVDAERLVVRYDEEQDKTDLTFGEPVQEYELTKFRRTNQGTCMNQKPIVQAGDRVEEGEVLTDGFAMEKGELALGKNVLCAFMPWHGYNYEDAIVISERLVADDVYTSVHIEEFEHEVRDTKRGEEELTREIPNVSEEATKDLDERGIVRVGAEITPGDIIVGKITPKGETDPTPEEKLLRAIFGDKAGDVKDASLKAKPGMEGGVVIDTRLFSRRELDPASKKMEEKRLENIESDHERKLADLNERFWEKFFALVEDATSAGLEDREGEVLLTEGADFEEDAFDEVDPSDLSTRAEFTEDEELNDQISTLLRNYKSRRRDIEGTTKRQKHQVEMGDELPSGVVQMAKVYVARKKKIEVGDKMAGRHGNKGVIAKIAPVEDMPFLDDGTPVDLVLNPLGVPSRMNLGQIYETLLGWAGDRLGVKYATPIFDGASLEDVGDELEKAGLPRDGKVQLYDGRTGEPFDEKTTVGQIYMMKLEHLVEDKMHARSIGPYSLITQQPLGGKAQFGGQRLGEMEVWALYAYGASNTLQEMLTFKSDDVEGRSEAYESIVKGENLPSPGVPESFNVLVRELQGLGLEVTLD.

It belongs to the RNA polymerase beta chain family. As to quaternary structure, the RNAP catalytic core consists of 2 alpha, 1 beta, 1 beta' and 1 omega subunit. When a sigma factor is associated with the core the holoenzyme is formed, which can initiate transcription.

It catalyses the reaction RNA(n) + a ribonucleoside 5'-triphosphate = RNA(n+1) + diphosphate. DNA-dependent RNA polymerase catalyzes the transcription of DNA into RNA using the four ribonucleoside triphosphates as substrates. The protein is DNA-directed RNA polymerase subunit beta of Salinibacter ruber (strain DSM 13855 / M31).